The sequence spans 491 residues: Putative mannan endo-1,4-beta-mannosidase 5 (491 aa).

A signal peptide spans 1 to 31 (METSYREEEARRKASLLHCIFFFLLGALAMA). Positions 134 and 248 each coordinate substrate. Catalysis depends on Glu-249, which acts as the Proton donor. Tyr-330 contributes to the substrate binding site. Glu-372 functions as the Nucleophile in the catalytic mechanism. A glycan (N-linked (GlcNAc...) asparagine) is linked at Asn-385. Substrate is bound at residue Trp-416. Residue Asn-471 is glycosylated (N-linked (GlcNAc...) asparagine).

It belongs to the glycosyl hydrolase 5 (cellulase A) family. In terms of tissue distribution, expression not detected.

The protein resides in the secreted. It catalyses the reaction Random hydrolysis of (1-&gt;4)-beta-D-mannosidic linkages in mannans, galactomannans and glucomannans.. This chain is Putative mannan endo-1,4-beta-mannosidase 5 (MAN5), found in Oryza sativa subsp. japonica (Rice).